The following is an 821-amino-acid chain: Spindle apparatus protein lin-5 (821 aa).

The segment at 161–199 (EASSGFRTPKRNNYSLTSLQTPTATARRLRTASSTARRS) is disordered. The span at 162–180 (ASSGFRTPKRNNYSLTSLQ) shows a compositional bias: polar residues. Residues 181 to 199 (TPTATARRLRTASSTARRS) show a composition bias toward low complexity. Residues 211–634 (KFMRSERELK…REKESAEIKK (424 aa)) are a coiled coil. 2 disordered regions span residues 736–758 (RSES…FTPS) and 779–821 (LKCS…SKKQ).

As to quaternary structure, interacts with gpr-1; gpr-1 forms a complex with gpr-2 and GDP-bound goa-1.

Its subcellular location is the cytoplasm. The protein resides in the cell cortex. It is found in the cytoskeleton. The protein localises to the spindle. It localises to the chromosome. Its subcellular location is the centromere. The protein resides in the kinetochore. It is found in the microtubule organizing center. The protein localises to the centrosome. Its function is as follows. Essential component of the spindle apparatus required for spindle positioning and chromosome movement. Acts to recruit or anchor gpr-1/gpr-2 complex to the spindle and cortex. Also involved, directly or indirectly, in cytokinesis and in the coupling of DNA replication, centrosome duplication and mitotic division. In Caenorhabditis elegans, this protein is Spindle apparatus protein lin-5 (lin-5).